A 241-amino-acid chain; its full sequence is MFFNSLLTNFAALEVGQHLYWQIGNIRLHGQVFLTSWILLGALLVFISLGTKKMENDPKGLQNLLEFLWDYIRDLARTQIGEKVYRDWMPFIGTLFLFVFVSNWGGALIPWRLIKLPSGELGAPTADINTTIALALLVSLSYFYAGLSNKGWRYFEYYVHPTPIMLPFKILEDFTKPLSLSFRLFGNILADELVVGVLVFLVPLILPIPVMFLGLFTSAIQALIFATLAAYYIGEAVEEHH.

Helical transmembrane passes span 30–50, 91–111, 128–148, 193–213, and 214–234; these read GQVF…ISLG, FIGT…LIPW, INTT…AGLS, LVVG…VMFL, and GLFT…YYIG.

Belongs to the ATPase A chain family. In terms of assembly, F-type ATPases have 2 components, CF(1) - the catalytic core - and CF(0) - the membrane proton channel. CF(1) has five subunits: alpha(3), beta(3), gamma(1), delta(1), epsilon(1). CF(0) has four main subunits: a, b, b' and c.

It localises to the cellular thylakoid membrane. In terms of biological role, key component of the proton channel; it plays a direct role in the translocation of protons across the membrane. The chain is ATP synthase subunit a from Prochlorococcus marinus (strain MIT 9301).